Here is a 170-residue protein sequence, read N- to C-terminus: RNA pyrophosphohydrolase (170 aa).

The Nudix hydrolase domain maps to 9 to 162 (PYRPCAGIMV…KRAVYEKVVA (154 aa)). Positions 50 to 71 (GGIDDGERPLTAAIRELYEETG) match the Nudix box motif.

Belongs to the Nudix hydrolase family. RppH subfamily. A divalent metal cation serves as cofactor.

Functionally, accelerates the degradation of transcripts by removing pyrophosphate from the 5'-end of triphosphorylated RNA, leading to a more labile monophosphorylated state that can stimulate subsequent ribonuclease cleavage. This chain is RNA pyrophosphohydrolase, found in Agrobacterium fabrum (strain C58 / ATCC 33970) (Agrobacterium tumefaciens (strain C58)).